The chain runs to 246 residues: Endonuclease NucS (246 aa).

This sequence belongs to the NucS endonuclease family.

The protein resides in the cytoplasm. Its function is as follows. Cleaves both 3' and 5' ssDNA extremities of branched DNA structures. This chain is Endonuclease NucS, found in Corynebacterium urealyticum (strain ATCC 43042 / DSM 7109).